The sequence spans 2131 residues: Beta/gamma crystallin domain-containing protein 1 (2131 aa).

5 disordered regions span residues 1–53, 104–370, 385–674, 688–707, and 723–743; these read MPLS…LPAP, KSRA…KGHA, TEGA…PVHK, RTNS…TPAS, and AKEM…NGVL. Residues 19 to 35 are compositionally biased toward basic residues; sequence PPKKHTTFHLWRSKKKQ. Polar residues predominate over residues 135–147; it reads RNGLESPTRSNAK. Basic and acidic residues-rich tracts occupy residues 160–169 and 184–194; these read LPERESERSR and GSPRENPREAE. Positions 248 to 265 are enriched in polar residues; that stretch reads ATTTAKQLHSSPGNSSRQ. Residues 414–424 are compositionally biased toward basic residues; that stretch reads SGRRSGRRRGS. Over residues 479–490 the composition is skewed to low complexity; the sequence is ASAASPESKPSP. A phosphoserine mark is found at Ser-483 and Ser-489. Basic and acidic residues-rich tracts occupy residues 536–546 and 562–572; these read PAKESPPKRVP and EAARAIPRELP. Residues 609 to 619 show a composition bias toward low complexity; it reads RAAGAPGASDA. Over residues 723-733 the composition is skewed to basic and acidic residues; that stretch reads AKEMEQPEKKV. A phosphoserine mark is found at Ser-737 and Ser-756. Disordered regions lie at residues 758-791 and 837-889; these read EEIL…DVQT and DIPT…KDTC. Positions 769–782 are enriched in polar residues; sequence GDSSENQALGPQPN. Residues 864–881 are compositionally biased toward low complexity; it reads SPAESSPGPSLSLSAPAP. Ser-892 bears the Phosphoserine mark. Disordered regions lie at residues 926 to 947, 1041 to 1101, 1271 to 1302, and 1316 to 1348; these read LELG…AVGS, QAQS…VFDS, STSQ…EQSN, and SSST…SRSN. The residue at position 933 (Thr-933) is a Phosphothreonine. A compositionally biased stretch (polar residues) spans 1055–1089; that stretch reads SSPTNSPSSGNHLATPQRPDQTVTNGQDSPASLLN. Composition is skewed to low complexity over residues 1091–1101, 1271–1288, and 1316–1327; these read SAGSDDSVFDS, STSQ…QPTT, and SSSTSHSSLKSP. The span at 1328–1348 shows a compositional bias: basic and acidic residues; sequence SHMEKYPQKEKTKEDLDSRSN. 12 Beta/gamma crystallin 'Greek key' domains span residues 1430 to 1469, 1470 to 1525, 1531 to 1571, 1572 to 1614, 1626 to 1678, 1679 to 1721, 1727 to 1769, 1770 to 1812, 1823 to 1860, 1861 to 1904, 1910 to 1950, and 1951 to 1992; these read GKVV…KVVR, GCWI…RHVV, SHID…KVHW, GTWL…RPLK, PKVV…KVLR, GIWV…RPIL, AHMI…NVLS, GVWV…QPIC, NQIH…RVSG, GSWV…RFID, PTII…QVIG, and GIWV…RPFV. Residues 1994–2127 enclose the Ricin B-type lectin domain; sequence KRIYFRLRNK…EKFTQVWEAM (134 aa).

Belongs to the beta/gamma-crystallin family.

Functionally, may function as suppressor of malignant melanoma. It may exert its effects through interactions with the cytoskeleton. The polypeptide is Beta/gamma crystallin domain-containing protein 1 (Homo sapiens (Human)).